Consider the following 189-residue polypeptide: Mediator of RNA polymerase II transcription subunit 21 (189 aa).

The interval 50–102 is disordered; sequence KIPKNSTAPPVPAGAPVPSQSSPPPPQTQRGASEAAADPNLPPAPDSPRTFAS. Residues 58–76 are compositionally biased toward pro residues; the sequence is PPVPAGAPVPSQSSPPPPQ. A coiled-coil region spans residues 127–170; the sequence is GIDSSEAEQEKRIRELEAELRGVEEEREAKIRELRTLGRTLERV.

The protein belongs to the Mediator complex subunit 21 family. As to quaternary structure, component of the Mediator complex.

The protein localises to the nucleus. In terms of biological role, component of the Mediator complex, a coactivator involved in the regulated transcription of nearly all RNA polymerase II-dependent genes. Mediator functions as a bridge to convey information from gene-specific regulatory proteins to the basal RNA polymerase II transcription machinery. Mediator is recruited to promoters by direct interactions with regulatory proteins and serves as a scaffold for the assembly of a functional preinitiation complex with RNA polymerase II and the general transcription factors. In Aspergillus clavatus (strain ATCC 1007 / CBS 513.65 / DSM 816 / NCTC 3887 / NRRL 1 / QM 1276 / 107), this protein is Mediator of RNA polymerase II transcription subunit 21 (srb7).